Here is a 651-residue protein sequence, read N- to C-terminus: Bromodomain-containing protein 7 (651 aa).

A Glycyl lysine isopeptide (Lys-Gly) (interchain with G-Cter in SUMO2) cross-link involves residue K21. The span at 35 to 45 shows a compositional bias: polar residues; that stretch reads TELSTGSSGHD. The tract at residues 35–132 is disordered; that stretch reads TELSTGSSGH…SSLAKQEEVE (98 aa). Positions 47-57 are enriched in basic and acidic residues; it reads SLFEDKNDHDK. K52 participates in a covalent cross-link: Glycyl lysine isopeptide (Lys-Gly) (interchain with G-Cter in SUMO2). A compositionally biased stretch (basic residues) spans 58 to 69; that stretch reads HKDRKRKKRKKG. The Nuclear localization signal signature appears at 65–96; that stretch reads KRKKGEKQIPGEEKGRKRRRVKEDKKKRDRDR. Basic and acidic residues predominate over residues 70–106; it reads EKQIPGEEKGRKRRRVKEDKKKRDRDRVENEAEKDLQ. Residues K127, K186, K197, K201, K212, and K241 each participate in a glycyl lysine isopeptide (Lys-Gly) (interchain with G-Cter in SUMO2) cross-link. One can recognise a Bromo domain in the interval 131 to 235; the sequence is VEQTPLQEAL…HSGMKILSQE (105 aa). The interval 253 to 312 is disordered; the sequence is TRKQKDGTDTSQSGEDGGCWQREREDSGDAEAHASKSPSKENKKKDNDMLEDKFKSNNLE. Positions 273–312 are enriched in basic and acidic residues; sequence QREREDSGDAEAHASKSPSKENKKKDNDMLEDKFKSNNLE. Residues S279 and S289 each carry the phosphoserine modification. Glycyl lysine isopeptide (Lys-Gly) (interchain with G-Cter in SUMO2) cross-links involve residues K305 and K307. Position 328 is an N6-acetyllysine (K328). K344 is covalently cross-linked (Glycyl lysine isopeptide (Lys-Gly) (interchain with G-Cter in SUMO2)). A Phosphoserine modification is found at S380. Residue K389 forms a Glycyl lysine isopeptide (Lys-Gly) (interchain with G-Cter in SUMO2) linkage. S482 bears the Phosphoserine mark. At T514 the chain carries Phosphothreonine. Residues 536–567 adopt a coiled-coil conformation; sequence SEEAEIFQKKLDETTRLLRELQEAQNERLSTR. S621 carries the post-translational modification Phosphoserine.

Interacts with TRIM24, PTPN13 and DVL1. Identified in a complex with SMARCA4/BRG1, SMARCC1/BAF155, SMARCE1/BAF57, DPF2/BAF45D and ARID2, subunits of the SWI/SNF-B (PBAF) chromatin remodeling complex. Interacts with IRF2 and HNRPUL1. Interacts (via N-terminus) with TP53. Interacts (via C-terminus) with EP300. Interacts with BRCA1. Interacts (via bromo domain) with histone H3 (via N-terminus) acetylated at 'Lys-14' (H3K14ac). Has low affinity for histone H3 acetylated at 'Lys-9' (H3K9ac). Has the highest affinity for histone H3 that is acetylated both at 'Lys-9' (H3K9ac) and at 'Lys-14' (H3K14ac). Has very low affinity for non-acetylated histone H3. Interacts (via bromo domain) with histone H4 (via N-terminus) acetylated at 'Lys-8' (H3K8ac) (in vitro).

The protein resides in the nucleus. The protein localises to the chromosome. Acts both as coactivator and as corepressor. May play a role in chromatin remodeling. Activator of the Wnt signaling pathway in a DVL1-dependent manner by negatively regulating the GSK3B phosphotransferase activity. Induces dephosphorylation of GSK3B at 'Tyr-216'. Down-regulates TRIM24-mediated activation of transcriptional activation by AR. Transcriptional corepressor that down-regulates the expression of target genes. Binds to target promoters, leading to increased histone H3 acetylation at 'Lys-9' (H3K9ac). Binds to the ESR1 promoter. Recruits BRCA1 and POU2F1 to the ESR1 promoter. Coactivator for TP53-mediated activation of transcription of a set of target genes. Required for TP53-mediated cell-cycle arrest in response to oncogene activation. Promotes acetylation of TP53 at 'Lys-382', and thereby promotes efficient recruitment of TP53 to target promoters. Inhibits cell cycle progression from G1 to S phase. This chain is Bromodomain-containing protein 7 (BRD7), found in Pongo abelii (Sumatran orangutan).